A 382-amino-acid polypeptide reads, in one-letter code: Solvent efflux pump periplasmic linker SrpA (382 aa).

Residues 1–23 (MRQIRSPRALRVIPLTALMLISG) form the signal peptide. Cysteine 24 is lipidated: N-palmitoyl cysteine. Residue cysteine 24 is the site of S-diacylglycerol cysteine attachment. Residues 98–127 (RTYEAQLRRAEANRTSAQNLARRYETLLKT) adopt a coiled-coil conformation.

It belongs to the membrane fusion protein (MFP) (TC 8.A.1) family.

The protein resides in the cell inner membrane. Its function is as follows. The periplasmic linker protein component of an organic solvent efflux pump. Involved in export of a number of low log POW compounds including hexane (log POW 3.5), toluene (log POW 2.5) and dimethylphthalate (log POW 2.3). The solvent resistance phenotype has been postulated to depend on the operon expression level. The polypeptide is Solvent efflux pump periplasmic linker SrpA (srpA) (Pseudomonas putida (Arthrobacter siderocapsulatus)).